Here is a 497-residue protein sequence, read N- to C-terminus: Ammonium transporter 1 (497 aa).

The Extracellular segment spans residues 1 to 32; sequence MSSTTDATPTPSGVNGGDSMTVNLNQFYNNGD. Residues 33-53 form a helical membrane-spanning segment; sequence VAWILTSTALVFIMIPGVGFF. Topologically, residues 54-63 are cytoplasmic; that stretch reads YSGLARRRSA. The helical transmembrane segment at 64-84 threads the bilayer; the sequence is ISMLFLSMMSVAIVAFQWFFW. Over 85-122 the chain is Extracellular; the sequence is GYSLTFSHEGGPYIGSLANFGLRQTLGRPSSGASSVPD. The helical transmembrane segment at 123-143 threads the bilayer; that stretch reads ILFCVFQGMFAAITPALAIGA. The Cytoplasmic segment spans residues 144–150; sequence AADRGRM. The helical transmembrane segment at 151-171 threads the bilayer; that stretch reads FPCMVFMFLWTSIVYDPIAFW. At 172-187 the chain is on the extracellular side; it reads TWNPNGWLNKLGSYDF. A helical membrane pass occupies residues 188–208; sequence AGGSPVHISSGMAALAYSIVI. At 209 to 223 the chain is on the cytoplasmic side; that stretch reads GKRCDHGTTKYRPHN. The helical transmembrane segment at 224 to 244 threads the bilayer; the sequence is VPHVVLGTVFLWFGWFGFNGG. Residues 245-253 are Extracellular-facing; sequence SSAAANMRG. Residues 254-274 form a helical membrane-spanning segment; it reads VMAVVVTHLAASVGGIVWCVI. Topologically, residues 275 to 281 are cytoplasmic; that stretch reads DFAKNRH. A helical transmembrane segment spans residues 282-302; sequence WSVVGFCEGAVAGLVAITPGS. Position 303 (glycine 303) is a topological domain, extracellular. Residues 304 to 324 form a helical membrane-spanning segment; that stretch reads FVPPWAAVVIGALGAVFCYAA. At 325-338 the chain is on the cytoplasmic side; it reads TYLKKIIRVDDALD. Residues 339-359 traverse the membrane as a helical segment; the sequence is IFAEHGVGGMVGNILTALFAA. The Extracellular portion of the chain corresponds to 360 to 394; that stretch reads DYIEALDGSGTAYTGGWITHHYIQLGYQLADTVSC. A helical membrane pass occupies residues 395–415; sequence AAYSFAVSCALLFVMNYIPGL. The Cytoplasmic segment spans residues 416-497; the sequence is SLRVSREDEV…AESEAQAPAI (82 aa). A disordered region spans residues 440 to 497; that stretch reads YKDSTDEPPPITTSGVQYTSPTVSDSASNEKEQEHRAQNEAQKEEEYRAESEAQAPAI. The segment covering 451 to 466 has biased composition (polar residues); the sequence is TTSGVQYTSPTVSDSA. The segment covering 467–490 has biased composition (basic and acidic residues); the sequence is SNEKEQEHRAQNEAQKEEEYRAES.

This sequence belongs to the ammonia transporter channel (TC 1.A.11.2) family.

Its subcellular location is the membrane. Functionally, transporter for ammonium to use as a nitrogen source. Under ammonium limitation acts as an ammonium sensor, generating a signal that leads to pseudohyphal growth. In Schizosaccharomyces pombe (strain 972 / ATCC 24843) (Fission yeast), this protein is Ammonium transporter 1 (amt1).